We begin with the raw amino-acid sequence, 344 residues long: Homoserine O-acetyltransferase (344 aa).

Cys142 acts as the Acyl-thioester intermediate in catalysis. The substrate site is built by Lys163 and Ser192. His235 (proton acceptor) is an active-site residue. Glu237 is a catalytic residue. Arg249 is a binding site for substrate.

The protein belongs to the MetA family.

The protein localises to the cytoplasm. It carries out the reaction L-homoserine + acetyl-CoA = O-acetyl-L-homoserine + CoA. It participates in amino-acid biosynthesis; L-methionine biosynthesis via de novo pathway; O-acetyl-L-homoserine from L-homoserine: step 1/1. Functionally, transfers an acetyl group from acetyl-CoA to L-homoserine, forming acetyl-L-homoserine. This Bifidobacterium adolescentis (strain ATCC 15703 / DSM 20083 / NCTC 11814 / E194a) protein is Homoserine O-acetyltransferase.